The sequence spans 60 residues: Large ribosomal subunit protein uL30 (60 aa).

This sequence belongs to the universal ribosomal protein uL30 family. Part of the 50S ribosomal subunit.

The polypeptide is Large ribosomal subunit protein uL30 (Leuconostoc citreum (strain KM20)).